A 313-amino-acid chain; its full sequence is Coproporphyrin III ferrochelatase (313 aa).

Residues histidine 191 and glutamate 270 each coordinate Fe(2+).

Belongs to the ferrochelatase family.

The protein localises to the cytoplasm. It carries out the reaction Fe-coproporphyrin III + 2 H(+) = coproporphyrin III + Fe(2+). Its pathway is porphyrin-containing compound metabolism; protoheme biosynthesis. Functionally, involved in coproporphyrin-dependent heme b biosynthesis. Catalyzes the insertion of ferrous iron into coproporphyrin III to form Fe-coproporphyrin III. This is Coproporphyrin III ferrochelatase from Enterococcus faecalis (strain ATCC 700802 / V583).